Here is a 504-residue protein sequence, read N- to C-terminus: uncharacterized protein (504 aa).

Disordered regions lie at residues methionine 1–tyrosine 59 and glycine 171–leucine 255. Basic and acidic residues-rich tracts occupy residues lysine 36 to glycine 50 and arginine 199 to glutamine 212. Residues serine 213 to arginine 232 show a composition bias toward polar residues.

This is an uncharacterized protein from Caenorhabditis elegans.